A 166-amino-acid chain; its full sequence is MNNCIKVVPIALRCQQRTISTSSVLEGKRNFRKFNAYNKRGTRVVKEAQKTLANPPVAIHKRGVRDTGILVDGQYVEIPEKIPDIIVPDLTGCKLKPYVSYKAPDVVQSEFTSLDLFNAVYSQKIIEDFKAGKLQKDGSAKEPSVNEQLTPEEALQRARKTGSDIF.

Residues 1–26 (MNNCIKVVPIALRCQQRTISTSSVLE) constitute a mitochondrion transit peptide. Residues 136 to 166 (KDGSAKEPSVNEQLTPEEALQRARKTGSDIF) form a disordered region.

Belongs to the mitochondrion-specific ribosomal protein mL41 family. As to quaternary structure, component of the mitochondrial ribosome large subunit (39S) which comprises a 16S rRNA and about 50 distinct proteins.

It is found in the mitochondrion. In Drosophila melanogaster (Fruit fly), this protein is Large ribosomal subunit protein mL41 (mRpL41).